A 130-amino-acid chain; its full sequence is Small ribosomal subunit protein uS9 (130 aa).

It belongs to the universal ribosomal protein uS9 family.

The chain is Small ribosomal subunit protein uS9 from Pseudoalteromonas atlantica (strain T6c / ATCC BAA-1087).